Consider the following 584-residue polypeptide: 2-succinyl-5-enolpyruvyl-6-hydroxy-3-cyclohexene-1-carboxylate synthase (584 aa).

Residues 563–584 (TDAEASHRERERLADRVTGLSV) are disordered. Residues 566–577 (EASHRERERLAD) show a composition bias toward basic and acidic residues.

The protein belongs to the TPP enzyme family. MenD subfamily. Homodimer. The cofactor is Mg(2+). Mn(2+) serves as cofactor. It depends on thiamine diphosphate as a cofactor.

The catalysed reaction is isochorismate + 2-oxoglutarate + H(+) = 5-enolpyruvoyl-6-hydroxy-2-succinyl-cyclohex-3-ene-1-carboxylate + CO2. Its pathway is quinol/quinone metabolism; 1,4-dihydroxy-2-naphthoate biosynthesis; 1,4-dihydroxy-2-naphthoate from chorismate: step 2/7. The protein operates within quinol/quinone metabolism; menaquinone biosynthesis. Catalyzes the thiamine diphosphate-dependent decarboxylation of 2-oxoglutarate and the subsequent addition of the resulting succinic semialdehyde-thiamine pyrophosphate anion to isochorismate to yield 2-succinyl-5-enolpyruvyl-6-hydroxy-3-cyclohexene-1-carboxylate (SEPHCHC). The protein is 2-succinyl-5-enolpyruvyl-6-hydroxy-3-cyclohexene-1-carboxylate synthase of Halobacterium salinarum (strain ATCC 29341 / DSM 671 / R1).